Reading from the N-terminus, the 266-residue chain is Apolipoprotein A-I (266 aa).

A signal peptide spans 1-18 (MKAVVLTLAVLFLTGSQA). Tandem repeats lie at residues 67-88 (LKLL…EQIG) and 89-110 (PVTQ…QEMS). The interval 67–266 (LKLLDNWDTL…DEATKKLNAQ (200 aa)) is 10 X approximate tandem repeats. Methionine sulfoxide is present on M109. The 3; half-length repeat unit spans residues 111 to 121 (KDLEEVKQKVQ). 5 tandem repeats follow at residues 122 to 143 (PYLD…QKVA), 144 to 165 (PLGT…EKLS), 166 to 187 (PLGE…AQLA), 188 to 209 (PYSD…ESGG), and 210 to 231 (ASLA…EKAK). Residues 232–242 (PALEDLRQGLL) form a 9; half-length repeat. The stretch at 243–266 (PVLESFKVGLMAIVDEATKKLNAQ) is repeat 10.

It belongs to the apolipoprotein A1/A4/E family. Homodimer. Interacts with APOA1BP and CLU. Component of a sperm activating protein complex (SPAP), consisting of APOA1, an immunoglobulin heavy chain, an immunoglobulin light chain and albumin. Interacts with NDRG1. Interacts with SCGB3A2. Interacts with NAXE and YJEFN3. Post-translationally, glycosylated. In terms of processing, palmitoylated. Phosphorylation sites are present in the extracellular medium.

Its subcellular location is the secreted. Participates in the reverse transport of cholesterol from tissues to the liver for excretion by promoting cholesterol efflux from tissues and by acting as a cofactor for the lecithin cholesterol acyltransferase (LCAT). As part of the SPAP complex, activates spermatozoa motility. In Acinonyx jubatus (Cheetah), this protein is Apolipoprotein A-I (APOA1).